Here is a 149-residue protein sequence, read N- to C-terminus: Large ribosomal subunit protein uL13 (149 aa).

The protein belongs to the universal ribosomal protein uL13 family. In terms of assembly, part of the 50S ribosomal subunit.

This protein is one of the early assembly proteins of the 50S ribosomal subunit, although it is not seen to bind rRNA by itself. It is important during the early stages of 50S assembly. This is Large ribosomal subunit protein uL13 from Bifidobacterium longum subsp. infantis (strain ATCC 15697 / DSM 20088 / JCM 1222 / NCTC 11817 / S12).